Here is a 646-residue protein sequence, read N- to C-terminus: Acetyl-coenzyme A synthetase (646 aa).

Residues 190 to 193 (RAGK) and Thr309 each bind CoA. ATP-binding positions include 385–387 (GEP), 409–414 (DTWWQT), Asp498, and Arg513. Residue Ser521 participates in CoA binding. Arg524 is an ATP binding site. Mg(2+) contacts are provided by Val535, His537, and Val540. Arg582 contacts CoA. Residue Lys607 is modified to N6-acetyllysine.

It belongs to the ATP-dependent AMP-binding enzyme family. Mg(2+) is required as a cofactor. Acetylated. Deacetylation by the SIR2-homolog deacetylase activates the enzyme.

It carries out the reaction acetate + ATP + CoA = acetyl-CoA + AMP + diphosphate. In terms of biological role, catalyzes the conversion of acetate into acetyl-CoA (AcCoA), an essential intermediate at the junction of anabolic and catabolic pathways. AcsA undergoes a two-step reaction. In the first half reaction, AcsA combines acetate with ATP to form acetyl-adenylate (AcAMP) intermediate. In the second half reaction, it can then transfer the acetyl group from AcAMP to the sulfhydryl group of CoA, forming the product AcCoA. The sequence is that of Acetyl-coenzyme A synthetase from Pseudoalteromonas atlantica (strain T6c / ATCC BAA-1087).